We begin with the raw amino-acid sequence, 328 residues long: Phosphate acyltransferase (328 aa).

It belongs to the PlsX family. In terms of assembly, homodimer. Probably interacts with PlsY.

It is found in the cytoplasm. It catalyses the reaction a fatty acyl-[ACP] + phosphate = an acyl phosphate + holo-[ACP]. The protein operates within lipid metabolism; phospholipid metabolism. Its function is as follows. Catalyzes the reversible formation of acyl-phosphate (acyl-PO(4)) from acyl-[acyl-carrier-protein] (acyl-ACP). This enzyme utilizes acyl-ACP as fatty acyl donor, but not acyl-CoA. This is Phosphate acyltransferase from Staphylococcus haemolyticus (strain JCSC1435).